The primary structure comprises 133 residues: Ribosome-binding factor A (133 aa).

It belongs to the RbfA family. Monomer. Binds 30S ribosomal subunits, but not 50S ribosomal subunits or 70S ribosomes.

It is found in the cytoplasm. One of several proteins that assist in the late maturation steps of the functional core of the 30S ribosomal subunit. Associates with free 30S ribosomal subunits (but not with 30S subunits that are part of 70S ribosomes or polysomes). Required for efficient processing of 16S rRNA. May interact with the 5'-terminal helix region of 16S rRNA. The polypeptide is Ribosome-binding factor A (Cytophaga hutchinsonii (strain ATCC 33406 / DSM 1761 / CIP 103989 / NBRC 15051 / NCIMB 9469 / D465)).